The primary structure comprises 422 residues: 5'-deoxyadenosine deaminase (422 aa).

Residues histidine 57 and histidine 59 each contribute to the Zn(2+) site. Positions 86 and 178 each coordinate substrate. Zn(2+) is bound at residue histidine 205. 2 residues coordinate substrate: glutamate 208 and aspartate 294. Aspartate 294 contacts Zn(2+).

Belongs to the metallo-dependent hydrolases superfamily. MTA/SAH deaminase family. In terms of assembly, homotetramer. Requires Zn(2+) as cofactor.

The enzyme catalyses 5'-deoxyadenosine + H2O + H(+) = 5'-deoxyinosine + NH4(+). It catalyses the reaction S-adenosyl-L-homocysteine + H2O + H(+) = S-inosyl-L-homocysteine + NH4(+). It carries out the reaction S-methyl-5'-thioadenosine + H2O + H(+) = S-methyl-5'-thioinosine + NH4(+). The catalysed reaction is adenosine + H2O + H(+) = inosine + NH4(+). It participates in amino-acid biosynthesis; S-adenosyl-L-methionine biosynthesis. Functionally, catalyzes the deamination of three SAM-derived enzymatic products, namely 5'-deoxyadenosine, S-adenosyl-L-homocysteine, and 5'-methylthioadenosine, to produce the inosine analogs. Can also deaminate adenosine. The preferred substrate for this enzyme is 5'-deoxyadenosine, but all these substrates are efficiently deaminated. Likely functions in a S-adenosyl-L-methionine (SAM) recycling pathway from S-adenosyl-L-homocysteine (SAH) produced from SAM-dependent methylation reactions. May also be involved in the recycling of 5'-deoxyadenosine, whereupon the 5'-deoxyribose moiety of 5'-deoxyinosine is further metabolized to deoxyhexoses used for the biosynthesis of aromatic amino acids in methanogens. The polypeptide is 5'-deoxyadenosine deaminase (Methanococcus vannielii (strain ATCC 35089 / DSM 1224 / JCM 13029 / OCM 148 / SB)).